A 341-amino-acid polypeptide reads, in one-letter code: Phenylalanine--tRNA ligase alpha subunit (341 aa).

Glu254 contacts Mg(2+).

It belongs to the class-II aminoacyl-tRNA synthetase family. Phe-tRNA synthetase alpha subunit type 1 subfamily. Tetramer of two alpha and two beta subunits. Mg(2+) serves as cofactor.

The protein localises to the cytoplasm. The enzyme catalyses tRNA(Phe) + L-phenylalanine + ATP = L-phenylalanyl-tRNA(Phe) + AMP + diphosphate + H(+). This Mycoplasma genitalium (strain ATCC 33530 / DSM 19775 / NCTC 10195 / G37) (Mycoplasmoides genitalium) protein is Phenylalanine--tRNA ligase alpha subunit (pheS).